The following is a 279-amino-acid chain: Small ribosomal subunit protein uS9m (279 aa).

It belongs to the universal ribosomal protein uS9 family.

It localises to the mitochondrion. This is Small ribosomal subunit protein uS9m (MRPS9) from Eremothecium gossypii (strain ATCC 10895 / CBS 109.51 / FGSC 9923 / NRRL Y-1056) (Yeast).